The sequence spans 453 residues: Chromosomal replication initiator protein DnaA (453 aa).

The interval Met1–Thr73 is domain I, interacts with DnaA modulators. Residues Thr73–Asp114 are domain II. Positions Val91–Pro103 are enriched in basic and acidic residues. A disordered region spans residues Val91–Glu113. The tract at residues Gln115–Ser331 is domain III, AAA+ region. Positions 159, 161, 162, and 163 each coordinate ATP. The tract at residues Arg332 to Gln453 is domain IV, binds dsDNA.

Belongs to the DnaA family. As to quaternary structure, oligomerizes as a right-handed, spiral filament on DNA at oriC.

It is found in the cytoplasm. Plays an essential role in the initiation and regulation of chromosomal replication. ATP-DnaA binds to the origin of replication (oriC) to initiate formation of the DNA replication initiation complex once per cell cycle. Binds the DnaA box (a 9 base pair repeat at the origin) and separates the double-stranded (ds)DNA. Forms a right-handed helical filament on oriC DNA; dsDNA binds to the exterior of the filament while single-stranded (ss)DNA is stabiized in the filament's interior. The ATP-DnaA-oriC complex binds and stabilizes one strand of the AT-rich DNA unwinding element (DUE), permitting loading of DNA polymerase. After initiation quickly degrades to an ADP-DnaA complex that is not apt for DNA replication. Binds acidic phospholipids. In Staphylococcus carnosus (strain TM300), this protein is Chromosomal replication initiator protein DnaA.